Consider the following 211-residue polypeptide: uncharacterized protein (211 aa).

The disordered stretch occupies residues 155 to 211 (AAENASEEGDKKQIITDSGKLPETEELTETTNEDLDIKQFSPYSSESSANVSSYNKS). Over residues 178–188 (TEELTETTNED) the composition is skewed to acidic residues. The segment covering 195-211 (SPYSSESSANVSSYNKS) has biased composition (low complexity).

This is an uncharacterized protein from Schizosaccharomyces pombe (strain 972 / ATCC 24843) (Fission yeast).